The following is a 1090-amino-acid chain: UPF0507 protein SCY_4172 (1090 aa).

The region spanning 289–436 is the VPS9 domain; sequence FSVNQLLTDF…FEDFNKNTGN (148 aa).

The protein belongs to the UPF0507 family.

The protein is UPF0507 protein SCY_4172 of Saccharomyces cerevisiae (strain YJM789) (Baker's yeast).